The sequence spans 175 residues: Nucleoplasmin-3 (175 aa).

An N-acetylalanine modification is found at Ala-2. Ser-16 carries the phosphoserine modification. At Arg-27 the chain carries Omega-N-methylarginine. 2 positions are modified to phosphoserine: Ser-147 and Ser-151.

It belongs to the nucleoplasmin family. Interacts with NPM (via N-terminus). Forms a pentamer with NPM at a ratio 4:1 (NPM3/NPM). Two pentamers form a decamer. Phosphorylated. In terms of tissue distribution, predominantly expressed in testis.

It is found in the nucleus. The protein localises to the nucleolus. Functionally, plays a role in the regulation of diverse cellular processes such as ribosome biogenesis, chromatin remodeling or protein chaperoning. Modulates the histone chaperone function and the RNA-binding activity of nucleolar phosphoprotein B23/NPM. Efficiently mediates chromatin remodeling when included in a pentamer containing NPM3 and NPM. This is Nucleoplasmin-3 (Npm3) from Mus musculus (Mouse).